A 205-amino-acid chain; its full sequence is SCO2-like protein RP587 (205 aa).

Residues C82, C86, and H172 each contribute to the Cu cation site.

The protein belongs to the SCO1/2 family.

The sequence is that of SCO2-like protein RP587 from Rickettsia prowazekii (strain Madrid E).